The chain runs to 276 residues: Large ribosomal subunit protein uL2c (276 aa).

The tract at residues 225-276 (AMNPVDHPHGGGEGRTPIGRKKPVTPWGYSALGKKSRKRNRYSDASILRRRE) is disordered.

It belongs to the universal ribosomal protein uL2 family. As to quaternary structure, part of the 50S ribosomal subunit.

The protein localises to the plastid. It is found in the chloroplast. In Pinus thunbergii (Japanese black pine), this protein is Large ribosomal subunit protein uL2c (rpl2).